Reading from the N-terminus, the 241-residue chain is Protocatechuate 3,4-dioxygenase beta chain (241 aa).

4 residues coordinate Fe cation: Y109, Y148, H161, and H163.

The protein belongs to the intradiol ring-cleavage dioxygenase family. As to quaternary structure, the enzyme is an oligomer of 12 copies of the alpha and beta chains. It depends on Fe(3+) as a cofactor.

It carries out the reaction 3,4-dihydroxybenzoate + O2 = 3-carboxy-cis,cis-muconate + 2 H(+). It participates in aromatic compound metabolism; beta-ketoadipate pathway; 3-carboxy-cis,cis-muconate from 3,4-dihydroxybenzoate: step 1/1. In terms of biological role, plays an essential role in the utilization of numerous aromatic and hydroaromatic compounds via the beta-ketoadipate pathway. The polypeptide is Protocatechuate 3,4-dioxygenase beta chain (pcaH) (Acinetobacter baylyi (strain ATCC 33305 / BD413 / ADP1)).